Here is a 480-residue protein sequence, read N- to C-terminus: Protein nucleotidyltransferase YdiU (480 aa).

ATP contacts are provided by Gly86, Gly88, Arg89, Lys109, Asp121, Gly122, Arg172, and Arg179. The active-site Proton acceptor is the Asp248. The Mg(2+) site is built by Asn249 and Asp258. ATP is bound at residue Asp258.

The protein belongs to the SELO family. The cofactor is Mg(2+). Requires Mn(2+) as cofactor.

It carries out the reaction L-seryl-[protein] + ATP = 3-O-(5'-adenylyl)-L-seryl-[protein] + diphosphate. It catalyses the reaction L-threonyl-[protein] + ATP = 3-O-(5'-adenylyl)-L-threonyl-[protein] + diphosphate. The catalysed reaction is L-tyrosyl-[protein] + ATP = O-(5'-adenylyl)-L-tyrosyl-[protein] + diphosphate. The enzyme catalyses L-histidyl-[protein] + UTP = N(tele)-(5'-uridylyl)-L-histidyl-[protein] + diphosphate. It carries out the reaction L-seryl-[protein] + UTP = O-(5'-uridylyl)-L-seryl-[protein] + diphosphate. It catalyses the reaction L-tyrosyl-[protein] + UTP = O-(5'-uridylyl)-L-tyrosyl-[protein] + diphosphate. Functionally, nucleotidyltransferase involved in the post-translational modification of proteins. It can catalyze the addition of adenosine monophosphate (AMP) or uridine monophosphate (UMP) to a protein, resulting in modifications known as AMPylation and UMPylation. This is Protein nucleotidyltransferase YdiU from Salmonella newport (strain SL254).